Consider the following 50-residue polypeptide: Large ribosomal subunit protein bL32 (50 aa).

Residues 1–26 are compositionally biased toward basic residues; that stretch reads MAVPKRRVSHTRSAKRRTHYKITLKK. Positions 1–50 are disordered; it reads MAVPKRRVSHTRSAKRRTHYKITLKKPVKDSDGSWKMPHMVNPNTGEYKN.

The protein belongs to the bacterial ribosomal protein bL32 family.

The chain is Large ribosomal subunit protein bL32 from Aliarcobacter butzleri (strain RM4018) (Arcobacter butzleri).